A 221-amino-acid polypeptide reads, in one-letter code: MFKAVLFDLDGVITDTAEYHFRAWKALAEEIGINGVDRQFNEQLKGVSREDSLQKILDLADKKVSAEEFKELAKRKNDNYVKMIQDVSPADVYPGILQLLKDLRSNKIKIALASASKNGPFLLEKMNLTGYFDAIADPAEVAASKPAPDIFIAAAHAVGVAPSESIGLEDSQAGIQAIKDSGALPIGVGRPEDLGDDIVIVPDTSYYTLEFLKEVWLQKQK.

The Nucleophile role is filled by aspartate 8. Mg(2+) contacts are provided by aspartate 8 and aspartate 10. Aspartate 8 carries the post-translational modification 4-aspartylphosphate. The active-site Proton donor/acceptor is aspartate 10. Beta-D-glucose 6-phosphate is bound by residues aspartate 10, glycine 46, valine 47, arginine 49, serine 116, lysine 117, and asparagine 118. Residue aspartate 170 participates in Mg(2+) binding.

This sequence belongs to the HAD-like hydrolase superfamily. CbbY/CbbZ/Gph/YieH family. Monomer. Mg(2+) is required as a cofactor. Post-translationally, autophosphorylated.

Its subcellular location is the cytoplasm. It carries out the reaction beta-D-glucose 1-phosphate = beta-D-glucose 6-phosphate. With respect to regulation, activated by phosphorylation. Competitively inhibited by alpha-D-galactose-1-phosphate. Its function is as follows. Catalyzes the interconversion of D-glucose 1-phosphate (G1P) and D-glucose 6-phosphate (G6P), forming beta-D-glucose 1,6-(bis)phosphate (beta-G16P) as an intermediate. The beta-phosphoglucomutase (Beta-PGM) acts on the beta-C(1) anomer of G1P. Glucose or lactose are used in preference to maltose, which is only utilized after glucose or lactose has been exhausted. It plays a key role in the regulation of the flow of carbohydrate intermediates in glycolysis and the formation of the sugar nucleotide UDP-glucose. In Lactococcus lactis subsp. lactis (strain IL1403) (Streptococcus lactis), this protein is Beta-phosphoglucomutase.